The primary structure comprises 1239 residues: Anion exchange protein 2 (1239 aa).

The interval methionine 1–arginine 237 is disordered. Residues methionine 1–cysteine 706 are Cytoplasmic-facing. Basic and acidic residues-rich tracts occupy residues glutamate 37–glutamate 49 and glycine 58–arginine 75. Basic residues-rich tracts occupy residues glutamine 76–leucine 85 and arginine 94–proline 110. Serine 113, serine 132, serine 144, serine 170, and serine 172 each carry phosphoserine. The span at threonine 120–glutamate 133 shows a compositional bias: acidic residues. The segment covering threonine 141–phenylalanine 155 has biased composition (low complexity). Low complexity predominate over residues glycine 189–glycine 207. The segment covering threonine 208–serine 217 has biased composition (gly residues). Serine 241 bears the Phosphoserine mark. Phosphothreonine is present on threonine 255. An N6-methyllysine modification is found at lysine 272. The segment at histidine 285–proline 318 is disordered. Serine 441 carries the post-translational modification Phosphoserine. A disordered region spans residues serine 447 to isoleucine 468. Membrane (anion exchange) regions lie at residues cysteine 706–valine 1239 and alanine 708–valine 1239. 4 helical membrane passes run leucine 707–leucine 727, phenylalanine 752–phenylalanine 772, isoleucine 794–valine 814, and isoleucine 824–isoleucine 844. At phenylalanine 845–glutamine 895 the chain is on the extracellular side. Asparagine 857, asparagine 866, and asparagine 880 each carry an N-linked (GlcNAc...) asparagine glycan. The helical transmembrane segment at proline 896–leucine 916 threads the bilayer. At arginine 917–arginine 931 the chain is on the cytoplasmic side. 5 consecutive transmembrane segments (helical) span residues valine 932–isoleucine 952, phenylalanine 987–phenylalanine 1007, leucine 1034–alanine 1054, arginine 1088–leucine 1108, and isoleucine 1111–isoleucine 1131. Cysteine 1171 carries the S-palmitoyl cysteine lipid modification. A helical transmembrane segment spans residues leucine 1172–isoleucine 1192.

This sequence belongs to the anion exchanger (TC 2.A.31) family.

It localises to the apical cell membrane. The protein localises to the basolateral cell membrane. It catalyses the reaction hydrogencarbonate(in) + chloride(out) = hydrogencarbonate(out) + chloride(in). Sodium-independent anion exchanger which mediates the electroneutral exchange of chloride for bicarbonate ions across the cell membrane. Plays an important role in osteoclast differentiation and function. Regulates bone resorption and calpain-dependent actin cytoskeleton organization in osteoclasts via anion exchange-dependent control of pH. Essential for intracellular pH regulation in CD8(+) T-cells upon CD3 stimulation, modulating CD8(+) T-cell response. The polypeptide is Anion exchange protein 2 (SLC4A2) (Pongo abelii (Sumatran orangutan)).